We begin with the raw amino-acid sequence, 500 residues long: MSDQQLDPQALQQEENTLIALRKEKLAAGRAKGQAFPNDFRRDSYCNDLQKQYVDKTKEELAEAAIPVKVAGRIMLNRGSFMVIQDMTGRIQVYVNRKTLAEETLAEVKTWDLGDIIAAEGTLARSGKGDLYVEMTTVRLLTKSLRPLPDKHHGLTDTEQRYRQRYVDLIVNEDVRETFRVRSQVIAHIRSFLMKRDFLEVETPMLQTIPGGAAAKPFETHHNALDMEMFLRIAPELYLKRLVVGGFEKVFEINRNFRNEGVSTRHNPEFTMLEFYQAYADYEDNMDLTEELFRELAQLVLGTTDVPYGDKVFHFGEPFVRLSVFDSILKYNPDLTAADLQDVDKARAIAKKAGAKVLGFEGLGKLQVMIFEELVEHKLKQPHFITQYPFEVSPLARRNDENPSVTDRFELFIGGREIANAYSELNDAEDQAERFQAQVADKDAGDDEAMHYDADFVRALEYGMPPTAGEGIGIDRLVMLLTDSPSIRDVILFPHMRPQA.

Residues Glu410 and Glu417 each contribute to the Mg(2+) site.

The protein belongs to the class-II aminoacyl-tRNA synthetase family. In terms of assembly, homodimer. Mg(2+) is required as a cofactor.

It is found in the cytoplasm. It catalyses the reaction tRNA(Lys) + L-lysine + ATP = L-lysyl-tRNA(Lys) + AMP + diphosphate. The sequence is that of Lysine--tRNA ligase from Pseudomonas savastanoi pv. phaseolicola (strain 1448A / Race 6) (Pseudomonas syringae pv. phaseolicola (strain 1448A / Race 6)).